Here is an 802-residue protein sequence, read N- to C-terminus: Phenylalanine--tRNA ligase beta subunit (802 aa).

A tRNA-binding domain is found at 40–149 (RPELDFVKIV…EGAEIGKTIR (110 aa)). Residues 407-484 (HKEVRIHTDI…RTRGYDTIQV (78 aa)) form the B5 domain. Mg(2+) contacts are provided by aspartate 462, aspartate 468, glutamate 471, and glutamate 472. The FDX-ACB domain occupies 710-802 (SQFPEAEIDI…LAGKNGFVLR (93 aa)).

This sequence belongs to the phenylalanyl-tRNA synthetase beta subunit family. Type 1 subfamily. Tetramer of two alpha and two beta subunits. It depends on Mg(2+) as a cofactor.

The protein resides in the cytoplasm. The catalysed reaction is tRNA(Phe) + L-phenylalanine + ATP = L-phenylalanyl-tRNA(Phe) + AMP + diphosphate + H(+). The protein is Phenylalanine--tRNA ligase beta subunit of Leptospira borgpetersenii serovar Hardjo-bovis (strain L550).